A 362-amino-acid chain; its full sequence is S-adenosylmethionine-dependent nucleotide dehydratase RSAD2 (362 aa).

Positions 47–73 (EQPQVRGEPEDTQETQEDGNSTQPTTP) are disordered. A compositionally biased stretch (polar residues) spans 64–73 (DGNSTQPTTP). One can recognise a Radical SAM core domain in the interval 70-290 (PTTPVSVNYH…LERHKEVSCL (221 aa)). Positions 84, 88, and 91 each coordinate [4Fe-4S] cluster. N6-acetyllysine is present on K198. K207 is covalently cross-linked (Glycyl lysine isopeptide (Lys-Gly) (interchain with G-Cter in ubiquitin)).

Belongs to the radical SAM superfamily. RSAD2 family. Homodimer. Interacts with IRAK1 and TRAF6. Interacts with FPPS. Interacts with HADHB. Interacts (via C-terminus) with VAPA/VAP33 (via C-terminus). [4Fe-4S] cluster serves as cofactor. Acetylated by HAT1. HAT1-mediated acetylation of Lys-198 in turn recruits UBE4A that stimulates RSAD2 polyubiquitination leading to proteasomal degradation. In terms of processing, 'Lys-6'-linked polyubiquitination at Lys-207 leads to RSAD2 protein degradation. In terms of tissue distribution, expressed at higher levels in atherosclerotic arteries than in normal arteries.

It localises to the endoplasmic reticulum membrane. It is found in the golgi apparatus. Its subcellular location is the endoplasmic reticulum. The protein localises to the lipid droplet. The protein resides in the mitochondrion. It localises to the mitochondrion inner membrane. It is found in the mitochondrion outer membrane. The enzyme catalyses CTP + AH2 + S-adenosyl-L-methionine = 3'-deoxy-3',4'-didehydro-CTP + 5'-deoxyadenosine + L-methionine + A + H2O + H(+). Its activity is regulated as follows. IRAK1 and TRAF6 synergistically activate RSAD2 increasing its activity with CTP as substrate about 10-fold. Functionally, interferon-inducible antiviral protein which plays a major role in the cell antiviral state induced by type I and type II interferon. Catalyzes the conversion of cytidine triphosphate (CTP) to 3'-deoxy-3',4'-didehydro-CTP (ddhCTP) via a SAM-dependent radical mechanism. In turn, ddhCTP acts as a chain terminator for the RNA-dependent RNA polymerases from multiple viruses and directly inhibits viral replication. Therefore, inhibits a wide range of DNA and RNA viruses. Also promotes TLR7 and TLR9-dependent production of IFN-beta production in plasmacytoid dendritic cells (pDCs) by facilitating 'Lys-63'-linked ubiquitination of IRAK1 by TRAF6. Plays a role in CD4+ T-cells activation and differentiation. Facilitates T-cell receptor (TCR)-mediated GATA3 activation and optimal T-helper 2 (Th2) cytokine production by modulating NFKB1 and JUNB activities. Can inhibit secretion of soluble proteins. This is S-adenosylmethionine-dependent nucleotide dehydratase RSAD2 from Mus musculus (Mouse).